The following is a 522-amino-acid chain: Ribonuclease Y (522 aa).

A helical transmembrane segment spans residues 7–23 (SGSSAAVISGLVGFYIS). The 67-residue stretch at 212–278 (LTNLVHLNDD…TKTLELLIQD (67 aa)) folds into the KH domain. The HD domain occupies 338 to 431 (ALSHTLEVAH…VCAADALSAA (94 aa)).

This sequence belongs to the RNase Y family.

The protein resides in the cell membrane. Functionally, endoribonuclease that initiates mRNA decay. The protein is Ribonuclease Y of Sulfurimonas denitrificans (strain ATCC 33889 / DSM 1251) (Thiomicrospira denitrificans (strain ATCC 33889 / DSM 1251)).